A 149-amino-acid polypeptide reads, in one-letter code: 3-dehydroquinate dehydratase (149 aa).

Tyr24 (proton acceptor) is an active-site residue. 3 residues coordinate substrate: Asn75, His81, and Asp88. Residue His101 is the Proton donor of the active site. Substrate contacts are provided by residues 102–103 (IS) and Arg112.

The protein belongs to the type-II 3-dehydroquinase family. As to quaternary structure, homododecamer.

The catalysed reaction is 3-dehydroquinate = 3-dehydroshikimate + H2O. Its pathway is metabolic intermediate biosynthesis; chorismate biosynthesis; chorismate from D-erythrose 4-phosphate and phosphoenolpyruvate: step 3/7. Its function is as follows. Catalyzes a trans-dehydration via an enolate intermediate. The sequence is that of 3-dehydroquinate dehydratase from Methylobacterium radiotolerans (strain ATCC 27329 / DSM 1819 / JCM 2831 / NBRC 15690 / NCIMB 10815 / 0-1).